Here is a 741-residue protein sequence, read N- to C-terminus: Oosporein cluster regulator OpS3 (741 aa).

A disordered region spans residues G16 to Q39. A compositionally biased stretch (low complexity) spans R20–S34. Positions C44–C69 form a DNA-binding region, zn(2)-C6 fungal-type. Residues H139 to A167 are disordered. The stretch at T473 to L500 forms a coiled coil. A disordered region spans residues T501 to N528. Polar residues predominate over residues R506 to N528.

It is found in the nucleus. Transcription factor involved in regulation of gene cluster that mediates the biosynthesis of oosporein, a metabolite required for fungal virulence that acts by evading host immunity to facilitate fungal multiplication in insects. Binds oosporein cluster genes at a conserved 5'-CGGA-3' motif with the exception of OpS5. The presence of this motif in the OpS3 promoter would suggest the formation of a positive feedback loop for self-activation. This is Oosporein cluster regulator OpS3 from Beauveria bassiana (strain ARSEF 2860) (White muscardine disease fungus).